A 1162-amino-acid polypeptide reads, in one-letter code: Lysine-specific demethylase 2A (1162 aa).

A Phosphoserine modification is found at Ser-28. Positions 148 to 316 constitute a JmjC domain; that stretch reads FSHTRLENMV…MQLKIYNIED (169 aa). Thr-209 is a binding site for substrate. Fe cation contacts are provided by His-212 and Asp-214. Residue Lys-229 coordinates substrate. His-284 contacts Fe cation. Residues 367-389 are disordered; that stretch reads GLESGNGDEEAVDREPRRLSSRR. Phosphoserine occurs at positions 390 and 394. A Glycyl lysine isopeptide (Lys-Gly) (interchain with G-Cter in SUMO2) cross-link involves residue Lys-505. Positions 532 to 557 are disordered; that stretch reads VPTIPITKPHTMKPAPRLTPVRPAAA. Thr-550 bears the Phosphothreonine mark. Ser-558 is subject to Phosphoserine. The CXXC-type zinc finger occupies 564-610; it reads ARRRRVRCRKCKACVQGECGVCHYCRDMKKFGGPGRMKQSCVLRQCL. The Zn(2+) site is built by Cys-571, Cys-574, Cys-577, Cys-582, Cys-585, Cys-588, Cys-604, Cys-609, Cys-620, and Cys-623. The PHD-type zinc finger occupies 617–678; sequence SVTCSLCGEV…CWECPKCYQE (62 aa). At Thr-632 the chain carries Phosphothreonine. The Zn(2+) site is built by Cys-642, Cys-645, His-650, Cys-653, Cys-672, and Cys-675. Residue Ser-692 is modified to Phosphoserine. The interval 704-789 is disordered; the sequence is PLRSCDEPLT…PSGKKELSEV (86 aa). At Thr-713 the chain carries Phosphothreonine. Ser-718 and Ser-731 each carry phosphoserine. 2 stretches are compositionally biased toward basic and acidic residues: residues 746-757 and 771-789; these read SDHHSASRDERF and TMVR…LSEV. Residues Ser-825, Ser-832, Ser-869, and Ser-883 each carry the phosphoserine modification. A disordered region spans residues 839-887; the sequence is HCPARTPQRGDEEGLGGEEEEEEEEEEEDDSAEEGGAARLNGRGSWAQD. The span at 851 to 871 shows a compositional bias: acidic residues; the sequence is EGLGGEEEEEEEEEEEDDSAE. The F-box domain occupies 889 to 936; that stretch reads DESWMQREVWMSVFRYLSRRELCECMRVCKTWYKWCCDKRLWTKIDLS. LRR repeat units follow at residues 961-982 and 984-1010; these read WTNI…LKDL and LAGC…DLRW. Position 1020 is an ADP-ribosylarginine (Arg-1020). LRR repeat units lie at residues 1048–1073, 1074–1103, 1104–1128, and 1129–1156; these read GLDI…DLSH, CSHL…NMAG, CNKL…DLRG, and CKQI…SDEK.

It belongs to the JHDM1 histone demethylase family. Interacts with CBX5/HP1A; the interaction promotes CBX5 localization to chromatin. The SKP1-KDM2A complex interacts with UBB. Part of a SCF (SKP1-cullin-F-box) protein ligase complex. Fe(2+) serves as cofactor. Mono-ADP-ribosylated at Arg-1020 in response to DNA damage, leading to displacement from chromatin, resulting in increased dimethylation of histone H3 at 'Lys-36'. As to expression, widely expressed, with highest levels in brain, testis and ovary, followed by lung.

Its subcellular location is the nucleus. The protein resides in the nucleoplasm. It is found in the chromosome. It catalyses the reaction N(6),N(6)-dimethyl-L-lysyl(36)-[histone H3] + 2 2-oxoglutarate + 2 O2 = L-lysyl(36)-[histone H3] + 2 formaldehyde + 2 succinate + 2 CO2. Its function is as follows. Histone demethylase that specifically demethylates 'Lys-36' of histone H3, thereby playing a central role in histone code. Preferentially demethylates dimethylated H3 'Lys-36' residue while it has weak or no activity for mono- and tri-methylated H3 'Lys-36'. May also recognize and bind to some phosphorylated proteins and promote their ubiquitination and degradation. Required to maintain the heterochromatic state. Associates with centromeres and represses transcription of small non-coding RNAs that are encoded by the clusters of satellite repeats at the centromere. Required to sustain centromeric integrity and genomic stability, particularly during mitosis. Regulates circadian gene expression by repressing the transcriptional activator activity of CLOCK-BMAL1 heterodimer and RORA in a catalytically-independent manner. The protein is Lysine-specific demethylase 2A (KDM2A) of Homo sapiens (Human).